Consider the following 454-residue polypeptide: Toluate 1,2-dioxygenase subunit alpha (454 aa).

Residues 51-148 (IYLAHESQIP…SFDCDGSHDL (98 aa)) enclose the Rieske domain. Residues cysteine 92, histidine 94, cysteine 112, and histidine 115 each coordinate [2Fe-2S] cluster. Fe cation is bound by residues histidine 221 and histidine 226.

The protein belongs to the bacterial ring-hydroxylating dioxygenase alpha subunit family. This dioxygenase system consists of three proteins: the two subunits of the hydroxylase component (XylX and XylY), and an electron transfer component (XylZ). Requires [2Fe-2S] cluster as cofactor. Fe cation is required as a cofactor.

The protein operates within xenobiotic degradation; toluene degradation. In Pseudomonas putida (Arthrobacter siderocapsulatus), this protein is Toluate 1,2-dioxygenase subunit alpha (xylX).